An 86-amino-acid chain; its full sequence is Exodeoxyribonuclease 7 small subunit (86 aa).

Residues 67 to 86 (RVSPASGGATEAPAPAERDR) are disordered.

Belongs to the XseB family. Heterooligomer composed of large and small subunits.

It localises to the cytoplasm. The catalysed reaction is Exonucleolytic cleavage in either 5'- to 3'- or 3'- to 5'-direction to yield nucleoside 5'-phosphates.. Bidirectionally degrades single-stranded DNA into large acid-insoluble oligonucleotides, which are then degraded further into small acid-soluble oligonucleotides. The sequence is that of Exodeoxyribonuclease 7 small subunit from Beutenbergia cavernae (strain ATCC BAA-8 / DSM 12333 / CCUG 43141 / JCM 11478 / NBRC 16432 / NCIMB 13614 / HKI 0122).